A 246-amino-acid polypeptide reads, in one-letter code: Azurocidin (246 aa).

Positions 1 to 19 (MPALRFLALLASLLATSRV) are cleaved as a signal peptide. The propeptide occupies 20–26 (GLATLAD). The region spanning 27 to 242 (IVGGRRAQPQ…FRNWIDSVLN (216 aa)) is the Peptidase S1 domain. A disulfide bridge connects residues C52 and C68. 2 N-linked (GlcNAc...) asparagine glycosylation sites follow: N139 and N170. 2 cysteine pairs are disulfide-bonded: C148–C205 and C178–C184. Positions 245–246 (PA) are excised as a propeptide.

Belongs to the peptidase S1 family. Elastase subfamily.

Its subcellular location is the cytoplasmic granule membrane. In terms of biological role, this is a neutrophil granule-derived antibacterial and monocyte- and fibroblast-specific chemotactic glycoprotein. Binds heparin. In Sus scrofa (Pig), this protein is Azurocidin.